Here is a 48-residue protein sequence, read N- to C-terminus: Large ribosomal subunit protein bL33B (48 aa).

The protein belongs to the bacterial ribosomal protein bL33 family.

The protein is Large ribosomal subunit protein bL33B (rpmG2) of Mycoplasma genitalium (strain ATCC 33530 / DSM 19775 / NCTC 10195 / G37) (Mycoplasmoides genitalium).